The following is a 510-amino-acid chain: Bone morphogenetic protein 6 (510 aa).

An N-terminal signal peptide occupies residues M1 to S20. The propeptide occupies C21–R371. 2 disordered regions span residues P87–S129 and N143–S199. Positions P106–Q116 are enriched in low complexity. 5 N-linked (GlcNAc...) asparagine glycosylation sites follow: N238, N266, N383, N401, and N451. The segment at T370 to G402 is disordered. The segment covering D390 to N401 has biased composition (polar residues). Intrachain disulfides connect C409/C475, C438/C507, and C442/C509.

Belongs to the TGF-beta family. In terms of assembly, interacts with SOSTDC1. Interacts (when glycosylated) with type I receptor ACVR1; the interaction may induce HAMP expression. Interacts with type II receptor ACVR2B. Interacts with Hemojuvelin/HJV. Interacts with ERFE; the interaction inhibits BMP-induced transcription of HAMP. Interacts with BMPR1A/ALK3. Forms heterodimers with BMP2 in vitro; the heterodimer then binds to its receptor BMPR1A /ALK3 and may induce HAMP expression. As to expression, expressed in the lung. Low levels seen in the kidney.

It localises to the secreted. Functionally, growth factor of the TGF-beta superfamily that plays essential roles in many developmental processes including cartilage and bone formation. Also plays an important role in the regulation of HAMP/hepcidin expression and iron metabolism by acting as a ligand for hemojuvelin/HJV. Also acts to promote expression of HAMP, potentially via the interaction with its receptor BMPR1A/ALK3. Initiates the canonical BMP signaling cascade by associating with type I receptor ACVR1 and type II receptor ACVR2B. In turn, ACVR1 propagates signal by phosphorylating SMAD1/5/8 that travel to the nucleus and act as activators and repressors of transcription of target. Can also signal through non-canonical pathway such as TAZ-Hippo signaling cascade to modulate VEGF signaling by regulating VEGFR2 expression. This is Bone morphogenetic protein 6 (Bmp6) from Mus musculus (Mouse).